We begin with the raw amino-acid sequence, 379 residues long: Ribokinase (379 aa).

Substrate-binding positions include 78–80 (NAD), 106–110 (GKGAN), and glutamate 210. ATP contacts are provided by residues asparagine 255 and 291 to 296 (KLGSKG). Positions 319 and 321 each coordinate K(+). 324–325 (GD) provides a ligand contact to ATP. Aspartate 325 provides a ligand contact to substrate. Catalysis depends on aspartate 325, which acts as the Proton acceptor. Cysteine 355, valine 358, glycine 360, and serine 364 together coordinate K(+).

The protein belongs to the carbohydrate kinase PfkB family. Ribokinase subfamily. As to quaternary structure, homodimer. It depends on Mg(2+) as a cofactor.

The protein resides in the plastid. The protein localises to the chloroplast stroma. Its subcellular location is the chloroplast nucleoid. The enzyme catalyses D-ribose + ATP = D-ribose 5-phosphate + ADP + H(+). It participates in carbohydrate metabolism; D-ribose degradation; D-ribose 5-phosphate from beta-D-ribopyranose: step 2/2. Its activity is regulated as follows. Activated by a monovalent cation that binds near, but not in, the active site. The most likely occupant of the site in vivo is potassium. Ion binding induces a conformational change that may alter substrate affinity. Repressed by calcium, rubidium and sodium. Substrate inhibition is observed in the presence of high ATP concentration (Ki=2.44 mM). Its function is as follows. Catalyzes the phosphorylation of ribose at O-5 in a reaction requiring ATP and magnesium. The resulting D-ribose-5-phosphate can then be used either for sythesis of nucleotides, histidine, and tryptophan, or as a component of the pentose phosphate pathway. Can also use xylose and fructose as carbohydrate substrates with a low efficiency. Can use GTP, and, to a lower extent, CTP and UTP as alternative phosphoryl donors. In Arabidopsis thaliana (Mouse-ear cress), this protein is Ribokinase.